Consider the following 251-residue polypeptide: Fibroblast growth factor 23 (251 aa).

The first 24 residues, 1–24, serve as a signal peptide directing secretion; sequence MLGTCLRLLVGVLCTVCSLGTARA. An intrachain disulfide couples Cys95 to Cys113. Thr171 and Thr178 each carry an O-linked (GalNAc) threonine glycan. Positions 175-251 are disordered; the sequence is RRHTRSAEDP…DRCRPFPRFV (77 aa). The span at 179–189 shows a compositional bias: basic and acidic residues; the sequence is RSAEDPPERDP. Ser180 bears the Phosphoserine; by FAM20C mark.

Belongs to the heparin-binding growth factors family. As to quaternary structure, interacts with FGFR1. Interacts with FGFR2, FGFR3 and FGFR4. Affinity between fibroblast growth factors (FGFs) and their receptors is increased by KL and heparan sulfate glycosaminoglycans that function as coreceptors. Following secretion this protein is inactivated by cleavage into a N-terminal fragment and a C-terminal fragment. The processing is effected by proprotein convertases. In terms of processing, O-glycosylated at Thr-171 and Thr-178 by GALNT3 and glycosylation of Thr-178 requires previous glycosylation at Thr171. Glycosylation is necessary for secretion; it blocks processing by proprotein convertases when the O-glycan is alpha 2,6-sialylated. Competition between proprotein convertase cleavage and block of cleavage by O-glycosylation determines the level of secreted active FGF23. Post-translationally, phosphorylation at Ser-180 mediated by FAM20C slows down glycosylation at Thr-178 notably. As to expression, mainly expressed in the brain and thymus at low levels. In brain; preferentially expressed in the ventrolateral thalamic nucleus.

The protein localises to the secreted. Regulator of phosphate homeostasis. Inhibits renal tubular phosphate transport by reducing SLC34A1 levels. Acts directly on the parathyroid to decrease PTH secretion. Regulator of vitamin-D metabolism. Negatively regulates osteoblasts differentiation and matrix mineralization. Up-regulates EGR1 expression in the presence of KL. In Mus musculus (Mouse), this protein is Fibroblast growth factor 23 (Fgf23).